Consider the following 328-residue polypeptide: MSKKPVRVAVTGAAGQIGYALLFRIASGEMLGKDQPVILQLLEIPDEKAQKALKGVMMELEDCAFPLLAGMEAHSDPMTAFKDTDYALLVGARPRGPGMERADLLAANAQIFTAQGKALNAVASRNVKVLVVGNPANTNAYIAMKSAPDLPAKNFTAMLRLDHNRAASQIAAKTGGKVGEIEKLTVWGNHSPTMYADYRFATIGGKSVKDAINDQVWNADVFLPTVGKRGAAIIEARGLSSAASAANAAIDHMRDWALGSNGKWVTMGVPSKGEYGIPEGIVFGFPVITENGEYKIVEGLEIDAFSQERINKTLAELQGEQDGVKHLL.

12–18 (GAAGQIG) serves as a coordination point for NAD(+). The substrate site is built by Arg95 and Arg101. NAD(+) is bound by residues Asn108, Gln115, and 132–134 (VGN). The substrate site is built by Asn134 and Arg165. Catalysis depends on His190, which acts as the Proton acceptor.

This sequence belongs to the LDH/MDH superfamily. MDH type 2 family.

The enzyme catalyses (S)-malate + NAD(+) = oxaloacetate + NADH + H(+). Functionally, catalyzes the reversible oxidation of malate to oxaloacetate. The polypeptide is Malate dehydrogenase (Paracidovorax citrulli (strain AAC00-1) (Acidovorax citrulli)).